Reading from the N-terminus, the 417-residue chain is Peptidyl-Asp metalloendopeptidase (417 aa).

Positions 1–25 (MLSRSIGKAAGGLVLGLSVAAAAHA) are cleaved as a signal peptide. Position 327 (His-327) interacts with Zn(2+). Glu-328 is an active-site residue. Zn(2+) is bound by residues His-331 and His-337.

This sequence belongs to the peptidase M72 family. It depends on Zn(2+) as a cofactor.

The catalysed reaction is Cleavage of Xaa-|-Asp, Xaa-|-Glu and Xaa-|-cysteic acid bonds.. In terms of biological role, metalloprotease, specifically cleaves on the N-terminal side of aspartyl, glutamyl and cysteic acid residues. The sequence is that of Peptidyl-Asp metalloendopeptidase from Stenotrophomonas maltophilia (strain K279a).